A 118-amino-acid polypeptide reads, in one-letter code: Large ribosomal subunit protein bL12 (118 aa).

An N-acetylmethionine; in form MA2 modification is found at M1.

The protein belongs to the bacterial ribosomal protein bL12 family. As to quaternary structure, homodimer. Part of the ribosomal stalk of the 50S ribosomal subunit. Forms a multimeric L10(L12)X complex, where L10 forms an elongated spine to which 2 to 4 L12 dimers bind in a sequential fashion. Binds GTP-bound translation factors. Post-translationally, acetylation of Met-1 converts MA1 to MA2.

Forms part of the ribosomal stalk which helps the ribosome interact with GTP-bound translation factors. Is thus essential for accurate translation. The protein is Large ribosomal subunit protein bL12 of Micrococcus luteus (Micrococcus lysodeikticus).